Consider the following 475-residue polypeptide: UDP-N-acetylmuramate--L-alanine ligase (475 aa).

118-124 contributes to the ATP binding site; sequence GTHGKTT.

Belongs to the MurCDEF family.

The protein resides in the cytoplasm. The catalysed reaction is UDP-N-acetyl-alpha-D-muramate + L-alanine + ATP = UDP-N-acetyl-alpha-D-muramoyl-L-alanine + ADP + phosphate + H(+). It participates in cell wall biogenesis; peptidoglycan biosynthesis. Functionally, cell wall formation. The protein is UDP-N-acetylmuramate--L-alanine ligase of Thermosynechococcus vestitus (strain NIES-2133 / IAM M-273 / BP-1).